Here is a 599-residue protein sequence, read N- to C-terminus: Prostaglandin G/H synthase 1 (599 aa).

An N-terminal signal peptide occupies residues 1-23; the sequence is MSRSLLLWFLLFLLLLPPLPVLL. The 39-residue stretch at 31 to 69 folds into the EGF-like domain; that stretch reads PVNPCCYYPCQHQGICVRFGLDRYQCDCTRTGYSGPNCT. Disulfide bonds link cysteine 35–cysteine 46, cysteine 36–cysteine 158, cysteine 40–cysteine 56, and cysteine 58–cysteine 68. Asparagine 67, asparagine 103, and asparagine 143 each carry an N-linked (GlcNAc...) asparagine glycan. Catalysis depends on histidine 206, which acts as the Proton acceptor. Tyrosine 384 serves as the catalytic For cyclooxygenase activity. Histidine 387 provides a ligand contact to heme b. Cysteine 568 and cysteine 574 are oxidised to a cystine.

It belongs to the prostaglandin G/H synthase family. As to quaternary structure, homodimer. Requires heme b as cofactor.

The protein localises to the microsome membrane. It is found in the endoplasmic reticulum membrane. It catalyses the reaction (5Z,8Z,11Z,14Z)-eicosatetraenoate + AH2 + 2 O2 = prostaglandin H2 + A + H2O. The catalysed reaction is (5Z,8Z,11Z,14Z)-eicosatetraenoate + 2 O2 = prostaglandin G2. It carries out the reaction prostaglandin G2 + AH2 = prostaglandin H2 + A + H2O. The enzyme catalyses (9Z,12Z)-octadecadienoate + AH2 + O2 = (9R)-hydroxy-(10E,12Z)-octadecadienoate + A + H2O. It catalyses the reaction (9Z,12Z)-octadecadienoate + AH2 + O2 = (9S)-hydroxy-(10E,12Z)-octadecadienoate + A + H2O. The catalysed reaction is (9Z,12Z)-octadecadienoate + AH2 + O2 = (13S)-hydroxy-(9Z,11E)-octadecadienoate + A + H2O. It carries out the reaction (9Z,12Z)-octadecadienoate + AH2 + O2 = (13R)-hydroxy-(9Z,11E)-octadecadienoate + A + H2O. Its pathway is lipid metabolism; prostaglandin biosynthesis. With respect to regulation, the cyclooxygenase activity is inhibited by nonsteroidal anti-inflammatory drugs (NSAIDs) including ibuprofen, flurbiprofen, ketoprofen, naproxen, flurbiprofen, anirolac, fenclofenac and diclofenac. Dual cyclooxygenase and peroxidase that plays an important role in the biosynthesis pathway of prostanoids, a class of C20 oxylipins mainly derived from arachidonate ((5Z,8Z,11Z,14Z)-eicosatetraenoate, AA, C20:4(n-6)), with a particular role in the inflammatory response. The cyclooxygenase activity oxygenates AA to the hydroperoxy endoperoxide prostaglandin G2 (PGG2), and the peroxidase activity reduces PGG2 to the hydroxy endoperoxide prostaglandin H2 (PGH2), the precursor of all 2-series prostaglandins and thromboxanes. This complex transformation is initiated by abstraction of hydrogen at carbon 13 (with S-stereochemistry), followed by insertion of molecular O2 to form the endoperoxide bridge between carbon 9 and 11 that defines prostaglandins. The insertion of a second molecule of O2 (bis-oxygenase activity) yields a hydroperoxy group in PGG2 that is then reduced to PGH2 by two electrons. Involved in the constitutive production of prostanoids in particular in the stomach and platelets. In gastric epithelial cells, it is a key step in the generation of prostaglandins, such as prostaglandin E2 (PGE2), which plays an important role in cytoprotection. In platelets, it is involved in the generation of thromboxane A2 (TXA2), which promotes platelet activation and aggregation, vasoconstriction and proliferation of vascular smooth muscle cells. Can also use linoleate (LA, (9Z,12Z)-octadecadienoate, C18:2(n-6)) as substrate and produce hydroxyoctadecadienoates (HODEs) in a regio- and stereospecific manner, being (9R)-HODE ((9R)-hydroxy-(10E,12Z)-octadecadienoate) and (13S)-HODE ((13S)-hydroxy-(9Z,11E)-octadecadienoate) its major products. This Homo sapiens (Human) protein is Prostaglandin G/H synthase 1.